Consider the following 326-residue polypeptide: S-methyl-5'-thioadenosine phosphorylase (326 aa).

Phosphate-binding positions include serine 44, 86-87 (RH), and 119-120 (SA). Methionine 220 contacts substrate. A phosphate-binding site is contributed by threonine 221. 244–246 (DYD) serves as a coordination point for substrate.

The protein belongs to the PNP/MTAP phosphorylase family. MTAP subfamily. Homohexamer. Dimer of a homotrimer.

The enzyme catalyses S-methyl-5'-thioadenosine + phosphate = 5-(methylsulfanyl)-alpha-D-ribose 1-phosphate + adenine. Its pathway is amino-acid biosynthesis; L-methionine biosynthesis via salvage pathway; S-methyl-5-thio-alpha-D-ribose 1-phosphate from S-methyl-5'-thioadenosine (phosphorylase route): step 1/1. Catalyzes the reversible phosphorylation of S-methyl-5'-thioadenosine (MTA) to adenine and 5-methylthioribose-1-phosphate. Involved in the breakdown of MTA, a major by-product of polyamine biosynthesis. Responsible for the first step in the methionine salvage pathway after MTA has been generated from S-adenosylmethionine. Has broad substrate specificity with 6-aminopurine nucleosides as preferred substrates. In Synechocystis sp. (strain PCC 6803 / GT-S), this protein is S-methyl-5'-thioadenosine phosphorylase.